A 1637-amino-acid chain; its full sequence is Glutamate rich 3 (1637 aa).

Disordered regions lie at residues 145–192 (PLTL…GSLL), 408–453 (PSST…KESC), 478–814 (EWKG…QDAG), 1111–1194 (VGTS…SPRE), 1238–1445 (IEKV…SGER), and 1457–1637 (KAEN…RETA). The span at 169 to 185 (LLSSRQTRNGSKITSGS) shows a compositional bias: polar residues. 3 stretches are compositionally biased toward basic and acidic residues: residues 416–426 (EKITEKKEEPP), 443–452 (KRNEMERKES), and 478–487 (EWKGKSGRDV). Residues 500-523 (YEEDFEVDDEKQDEKVDEDEDQAD) show a composition bias toward acidic residues. Residues 534–557 (TESEKDNRNPEKKIETSSEKAHDS) are compositionally biased toward basic and acidic residues. Positions 558 to 572 (ENEDTGCSDSEEDDR) are enriched in acidic residues. Low complexity-rich tracts occupy residues 579-590 (SSISSRSHPYSS) and 608-617 (EEGSSRSSSS). Composition is skewed to basic and acidic residues over residues 619–638 (DLRE…KYLE), 677–693 (ESEH…EVRA), 769–802 (QEMH…ESGM), 1115–1130 (EVKE…KTDG), 1264–1307 (LKTE…KDVE), 1319–1329 (KLLEDPPKERA), 1342–1357 (SPKE…KGGE), and 1402–1412 (RCEEWAAKELD). Over residues 1476-1487 (VTGSLTGQNWNM) the composition is skewed to polar residues. Basic and acidic residues-rich tracts occupy residues 1550-1568 (AEER…KVAV), 1589-1599 (AQDREGGETKA), and 1614-1637 (GKDE…RETA).

The protein localises to the cell projection. Its subcellular location is the cilium. It localises to the cytoplasm. In terms of biological role, component of the primary cilium that controls cilium formation and length. May function within retrograde intraflagellar transport (IFT)-associated pathways to remove signaling proteins from primary cilia. Also involved in neuronal vesicle biogenesis and neurotransmitter vesicular function. The polypeptide is Glutamate rich 3 (Mus musculus (Mouse)).